A 155-amino-acid chain; its full sequence is Pathogenesis-related protein B (155 aa).

Belongs to the BetVI family.

In Petroselinum crispum (Parsley), this protein is Pathogenesis-related protein B (PCPR1-3).